The chain runs to 232 residues: Ubiquinone biosynthesis O-methyltransferase (232 aa).

4 residues coordinate S-adenosyl-L-methionine: R36, G55, D76, and M120.

Belongs to the methyltransferase superfamily. UbiG/COQ3 family.

The enzyme catalyses a 3-demethylubiquinol + S-adenosyl-L-methionine = a ubiquinol + S-adenosyl-L-homocysteine + H(+). It catalyses the reaction a 3-(all-trans-polyprenyl)benzene-1,2-diol + S-adenosyl-L-methionine = a 2-methoxy-6-(all-trans-polyprenyl)phenol + S-adenosyl-L-homocysteine + H(+). It participates in cofactor biosynthesis; ubiquinone biosynthesis. O-methyltransferase that catalyzes the 2 O-methylation steps in the ubiquinone biosynthetic pathway. This Chromobacterium violaceum (strain ATCC 12472 / DSM 30191 / JCM 1249 / CCUG 213 / NBRC 12614 / NCIMB 9131 / NCTC 9757 / MK) protein is Ubiquinone biosynthesis O-methyltransferase.